The following is a 639-amino-acid chain: Wall-associated receptor kinase-like 15 (639 aa).

A signal peptide spans 1–25 (MELPWLSLTTFTLSLLIYFSSTTQA). Over 26 to 282 (FKRCPNCGST…KRKSCKRWSN (257 aa)) the chain is Extracellular. N-linked (GlcNAc...) asparagine glycans are attached at residues asparagine 68, asparagine 115, asparagine 126, asparagine 141, and asparagine 241. Residues 283-303 (LPLLGGLAGGVGAILIAGFIT) form a helical membrane-spanning segment. At 304–639 (KTIVSKQNRR…KEIENILHGI (336 aa)) the chain is on the cytoplasmic side. The 286-residue stretch at 354–639 (FAKSNLLGFG…KEIENILHGI (286 aa)) folds into the Protein kinase domain. Residues 360-368 (LGFGGFGEV) and lysine 382 contribute to the ATP site. The active-site Proton acceptor is the aspartate 484.

This sequence belongs to the protein kinase superfamily. Ser/Thr protein kinase family.

The protein localises to the membrane. It carries out the reaction L-seryl-[protein] + ATP = O-phospho-L-seryl-[protein] + ADP + H(+). The catalysed reaction is L-threonyl-[protein] + ATP = O-phospho-L-threonyl-[protein] + ADP + H(+). Putative serine/threonine-protein kinase that may function as a signaling receptor of extracellular matrix component. In Arabidopsis thaliana (Mouse-ear cress), this protein is Wall-associated receptor kinase-like 15 (WAKL15).